Consider the following 1427-residue polypeptide: DNA-directed RNA polymerase subunit beta' (1427 aa).

The Zn(2+) site is built by Cys-66, Cys-68, Cys-81, and Cys-84. Residues Asp-472, Asp-474, and Asp-476 each contribute to the Mg(2+) site. Positions 815, 889, 896, and 899 each coordinate Zn(2+).

Belongs to the RNA polymerase beta' chain family. In terms of assembly, the RNAP catalytic core consists of 2 alpha, 1 beta, 1 beta' and 1 omega subunit. When a sigma factor is associated with the core the holoenzyme is formed, which can initiate transcription. The cofactor is Mg(2+). It depends on Zn(2+) as a cofactor.

The enzyme catalyses RNA(n) + a ribonucleoside 5'-triphosphate = RNA(n+1) + diphosphate. Its function is as follows. DNA-dependent RNA polymerase catalyzes the transcription of DNA into RNA using the four ribonucleoside triphosphates as substrates. This Bacteroides thetaiotaomicron (strain ATCC 29148 / DSM 2079 / JCM 5827 / CCUG 10774 / NCTC 10582 / VPI-5482 / E50) protein is DNA-directed RNA polymerase subunit beta'.